The following is a 325-amino-acid chain: L-lactate dehydrogenase (325 aa).

Residues Val19, Asp40, Lys45, Tyr70, and 84-85 each bind NAD(+); that span reads GA. Residues Gln87 and Arg93 each coordinate substrate. NAD(+)-binding positions include Thr106, 123–125, and Ser148; that span reads AAN. Residue 125-128 coordinates substrate; sequence NPVD. Residue 153-156 coordinates substrate; it reads DSAR. Arg158 and His173 together coordinate beta-D-fructose 1,6-bisphosphate. Catalysis depends on His180, which acts as the Proton acceptor. The residue at position 225 (Tyr225) is a Phosphotyrosine. Thr234 provides a ligand contact to substrate.

Belongs to the LDH/MDH superfamily. LDH family. In terms of assembly, homotetramer.

The protein localises to the cytoplasm. The enzyme catalyses (S)-lactate + NAD(+) = pyruvate + NADH + H(+). It functions in the pathway fermentation; pyruvate fermentation to lactate; (S)-lactate from pyruvate: step 1/1. Its activity is regulated as follows. Allosterically activated by fructose 1,6-bisphosphate (FBP). Catalyzes the conversion of lactate to pyruvate. This Latilactobacillus sakei subsp. sakei (strain 23K) (Lactobacillus sakei subsp. sakei) protein is L-lactate dehydrogenase.